A 175-amino-acid polypeptide reads, in one-letter code: MKLILIKPVKKLGKIMDIVDVANGFGRNYLLPRNYAIRATNANLEIVKSTVQQLNEKNQKGIAAAQAVMQKIDRSFITFICQTSDDGKLFGSITAKEIIKKLQISSDIKAYIDIKPIKTAGIHEVEVSLHAEVHCKIFINVARSNTEAQEYLKKFNTSLQDTNNNVLVEKNSSIS.

This sequence belongs to the bacterial ribosomal protein bL9 family.

Binds to the 23S rRNA. In Orientia tsutsugamushi (strain Boryong) (Rickettsia tsutsugamushi), this protein is Large ribosomal subunit protein bL9.